A 263-amino-acid polypeptide reads, in one-letter code: Genetic interactor of prohibitin 7, mitochondrial (263 aa).

The N-terminal 26 residues, 1-26 (MSLAMLTRNMLRRTSVRAFASSASNF), are a transit peptide targeting the mitochondrion. The chain crosses the membrane as a helical span at residues 188–204 (VTKTFIYITLFVMLFAI). The segment at 232–252 (KEQKEKEKEIEEENRKNQEKQ) is disordered.

This sequence belongs to the GEP7 family.

Its subcellular location is the mitochondrion membrane. Its function is as follows. Involved in respiratory growth and required for cell survival in the absence of prohibitins. In Clavispora lusitaniae (strain ATCC 42720) (Yeast), this protein is Genetic interactor of prohibitin 7, mitochondrial (GEP7).